The sequence spans 200 residues: Large ribosomal subunit protein uL4 (200 aa).

Residues 42-65 (TRAQKTRSEVSGGGAKPWRQKGTG) are disordered.

It belongs to the universal ribosomal protein uL4 family. Part of the 50S ribosomal subunit.

Its function is as follows. One of the primary rRNA binding proteins, this protein initially binds near the 5'-end of the 23S rRNA. It is important during the early stages of 50S assembly. It makes multiple contacts with different domains of the 23S rRNA in the assembled 50S subunit and ribosome. In terms of biological role, forms part of the polypeptide exit tunnel. The polypeptide is Large ribosomal subunit protein uL4 (Aliivibrio fischeri (strain MJ11) (Vibrio fischeri)).